Here is a 142-residue protein sequence, read N- to C-terminus: Type IV pilus subunit protein TapA (142 aa).

A propeptide spans 1–6 (leader sequence); the sequence is MKKQSG. F7 carries the N-methylphenylalanine modification. The helical transmembrane segment at 7–27 threads the bilayer; the sequence is FTLIELMIVVAIVAILAAIAL.

It belongs to the N-Me-Phe pilin family.

It localises to the membrane. Major component of the type IV (TAP) pilus. Aeromonas hydrophila possesses two distinct families of type IV pili: the bundle-forming pilus (Bfp) and the type IV pilus (Tap). The protein is Type IV pilus subunit protein TapA (tapA) of Aeromonas hydrophila.